The primary structure comprises 566 residues: Proline--tRNA ligase (566 aa).

Belongs to the class-II aminoacyl-tRNA synthetase family. ProS type 1 subfamily. As to quaternary structure, homodimer.

It is found in the cytoplasm. It carries out the reaction tRNA(Pro) + L-proline + ATP = L-prolyl-tRNA(Pro) + AMP + diphosphate. Catalyzes the attachment of proline to tRNA(Pro) in a two-step reaction: proline is first activated by ATP to form Pro-AMP and then transferred to the acceptor end of tRNA(Pro). As ProRS can inadvertently accommodate and process non-cognate amino acids such as alanine and cysteine, to avoid such errors it has two additional distinct editing activities against alanine. One activity is designated as 'pretransfer' editing and involves the tRNA(Pro)-independent hydrolysis of activated Ala-AMP. The other activity is designated 'posttransfer' editing and involves deacylation of mischarged Ala-tRNA(Pro). The misacylated Cys-tRNA(Pro) is not edited by ProRS. This chain is Proline--tRNA ligase, found in Coxiella burnetii (strain RSA 493 / Nine Mile phase I).